Consider the following 208-residue polypeptide: Frataxin, mitochondrial (208 aa).

Residues Met1–Gly40 constitute a mitochondrion transit peptide.

Belongs to the frataxin family. In terms of assembly, component of the mitochondrial core iron-sulfur cluster (ISC) complex composed of NFS1, LYRM4, NDUFAB1, ISCU, FXN, and FDX2; this complex is a heterohexamer containing two copies of each monomer. Homodimer. Monomer (probable predominant form). Oligomer. Monomers and polymeric aggregates of &gt;1 MDa have been isolated from mitochondria. A small fraction of heterologous overexpressed recombinant frataxin forms high-molecular weight aggregates that incorporate iron. Interacts with LYRM4. Interacts (via ferrous form) with ISCU; the interaction is possible when both are bound to the dimeric form of the cysteine desulfurase complex (NFS1:LYRM4) and the interaction enhances FXN interaction to the dimeric form of the cysteine desulfurase complex (NFS1:LYRM4). Interacts with FECH; one iron-bound FXN monomer seems to interact with a FECH homodimer. Interacts with SDHA and SDHB. Interacts with ACO2; the interaction is dependent on citrate. Interacts with HSPA9. As to quaternary structure, interacts with ACO1. Interacts with ISCU (cytoplasmic form). In terms of processing, processed in two steps by mitochondrial processing peptidase (MPP). MPP first cleaves the precursor to intermediate form and subsequently converts the intermediate to yield frataxin mature form (frataxin(81-210)) which is the predominant form. The additional forms, frataxin(56-210) and frataxin(78-210), seem to be produced when the normal maturation process is impaired; their physiological relevance is unsure.

The protein resides in the mitochondrion. Its subcellular location is the cytoplasm. It is found in the cytosol. It carries out the reaction 4 Fe(2+) + O2 + 4 H(+) = 4 Fe(3+) + 2 H2O. In terms of biological role, functions as an activator of persulfide transfer to the scaffoding protein ISCU as component of the core iron-sulfur cluster (ISC) assembly complex and participates to the [2Fe-2S] cluster assembly. Accelerates sulfur transfer from NFS1 persulfide intermediate to ISCU and to small thiols such as L-cysteine and glutathione leading to persulfuration of these thiols and ultimately sulfide release. Binds ferrous ion and is released from FXN upon the addition of both L-cysteine and reduced FDX2 during [2Fe-2S] cluster assembly. The core iron-sulfur cluster (ISC) assembly complex is involved in the de novo synthesis of a [2Fe-2S] cluster, the first step of the mitochondrial iron-sulfur protein biogenesis. This process is initiated by the cysteine desulfurase complex (NFS1:LYRM4:NDUFAB1) that produces persulfide which is delivered on the scaffold protein ISCU in a FXN-dependent manner. Then this complex is stabilized by FDX2 which provides reducing equivalents to accomplish the [2Fe-2S] cluster assembly. Finally, the [2Fe-2S] cluster is transferred from ISCU to chaperone proteins, including HSCB, HSPA9 and GLRX5. May play a role in the protection against iron-catalyzed oxidative stress through its ability to catalyze the oxidation of Fe(2+) to Fe(3+); the oligomeric form but not the monomeric form has in vitro ferroxidase activity. May be able to store large amounts of iron in the form of a ferrihydrite mineral by oligomerization; however, the physiological relevance is unsure as reports are conflicting and the function has only been shown using heterologous overexpression systems. May function as an iron chaperone protein that protects the aconitase [4Fe-4S]2+ cluster from disassembly and promotes enzyme reactivation. May play a role as a high affinity iron binding partner for FECH that is capable of both delivering iron to ferrochelatase and mediating the terminal step in mitochondrial heme biosynthesis. Functionally, modulates the RNA-binding activity of ACO1. May be involved in the cytoplasmic iron-sulfur protein biogenesis. May contribute to oxidative stress resistance and overall cell survival. The polypeptide is Frataxin, mitochondrial (Rattus norvegicus (Rat)).